We begin with the raw amino-acid sequence, 226 residues long: Large ribosomal subunit protein uL1 (226 aa).

The protein belongs to the universal ribosomal protein uL1 family. As to quaternary structure, part of the 50S ribosomal subunit.

Its function is as follows. Binds directly to 23S rRNA. The L1 stalk is quite mobile in the ribosome, and is involved in E site tRNA release. Functionally, protein L1 is also a translational repressor protein, it controls the translation of the L11 operon by binding to its mRNA. The sequence is that of Large ribosomal subunit protein uL1 from Borreliella afzelii (strain PKo) (Borrelia afzelii).